The chain runs to 350 residues: UDP-rhamnose/UDP-galactose transporter 3 (350 aa).

Transmembrane regions (helical) follow at residues 12-32, 41-61, 81-101, 104-124, 133-153, 160-180, 200-220, 224-244, 257-277, and 286-306; these read AVSDMGAWAMNVISSVGIIMA, GFAFSFATTLTGFHFALTALV, LIWFSIVANVSIAAMNFSLML, VGFYQISKLSMIPVVCVMEWI, EVKISVVVVVVGVGICTVTDV, FICACVAIFSSSLQQILIGSL, AFSLLVVGPLVDYLLSGKFIM, MSSGCFLFILLSCGLAVFCNI, SFQVIGHMKTVCILTLGWLLF, and VAGMIVAIVGMVIYSWAMELE.

This sequence belongs to the TPT transporter family. TPT (TC 2.A.7.9) subfamily.

Its subcellular location is the golgi apparatus membrane. Functionally, nucleotide-sugar transporter that transports UDP-rhamnose or UDP-galactose and UMP in a strict counter-exchange mode. The polypeptide is UDP-rhamnose/UDP-galactose transporter 3 (Arabidopsis thaliana (Mouse-ear cress)).